The primary structure comprises 408 residues: Indian hedgehog protein (408 aa).

A signal peptide spans 1 to 23; the sequence is MKPARLLLLLSGCALLLAPAVRC. A lipid anchor (N-palmitoyl cysteine) is attached at Cys-24. Positions 90, 91, 96, 126, 127, 130, and 132 each coordinate Ca(2+). Residues His-141, Asp-148, and His-183 each coordinate Zn(2+). The Cholesterol glycine ester moiety is linked to residue Gly-198.

The protein belongs to the hedgehog family. In terms of assembly, multimer. As to quaternary structure, interacts with BOC and CDON. Interacts with PTCH1. Interacts with glypican GPC3. Post-translationally, cholesterylation is required for N-product targeting to lipid rafts and multimerization. In terms of processing, the C-terminal domain displays an autoproteolysis activity and a cholesterol transferase activity. Both activities result in the cleavage of the full-length protein and covalent attachment of a cholesterol moiety to the C-terminal of the newly generated N-product. The N-product is the active species in both local and long-range signaling, whereas the C-product is degraded in the endoplasmic reticulum. N-palmitoylation by HHAT of N-product is required for indian hedgehog protein N-product multimerization and full activity. As to expression, expressed in developing midgut, lung and cartilage of developing long bones in the limb.

The protein localises to the cell membrane. It localises to the endoplasmic reticulum membrane. It is found in the golgi apparatus membrane. Its subcellular location is the secreted. It catalyses the reaction glycyl-L-cysteinyl-[protein] + cholesterol + H(+) = [protein]-C-terminal glycyl cholesterol ester + N-terminal L-cysteinyl-[protein]. Functionally, plays a role in embryonic morphogenesis; it is involved in the regulation of endochondral skeleton formation, and the development of retinal pigment epithelium (RPE), photoreceptors and periocular tissues. Its function is as follows. The C-terminal part of the indian hedgehog protein precursor displays an autoproteolysis and a cholesterol transferase activity. Both activities result in the cleavage of the full-length protein into two parts followed by the covalent attachment of a cholesterol moiety to the C-terminal of the newly generated N-product. Both activities occur in the endoplasmic reticulum. The dually lipidated indian hedgehog protein N-product is a morphogen which is essential for a variety of patterning events during development. Binds to the patched (PTCH1) receptor, which functions in association with smoothened (SMO), to activate the transcription of target genes. Plays a role in morphogenesis of the skeleton by coordinating growth and differentiation of the endochondral skeleton. Positively regulates PTHLH expression during endochondral bone formation preventing chondrocyte hypertrophy. In contrast, participates in normal chondrocyte proliferation in a PTHLH-independent pathway. In Gallus gallus (Chicken), this protein is Indian hedgehog protein.